We begin with the raw amino-acid sequence, 442 residues long: MHDIKSIRDNPQDFDAALTRRGLSPLSSQLLAIDERRRAAILASEQAQARRNAASREIGEAKKAKDEGRASALMEEVAKLKTTMPELEAAAKQADEELARELSAIPNLPLDEVPDGKDEHDNVERHVFGARRNYAFAPKAHDDIGTALGMDFESAAKLSGARFVVLKKGLARLERAIGQFMLDLHTTEHGYTEVNPPLLVRNDVMFGTGQLPKFEDDQFWAVRGELLIAPDERLKAERLGLIPTAEVALTNLVRESIVDEKELPMRLTALTPCFRAEAGAAGRDTRGMIRQHQFTKVELVSITTPETSKDEHERMLACAEEVLRRLDLHYRVITLCTGDMGFSSQKTYDIEVWMPGQGDGGAFREISSCSVCGDFQARRMDARYRASDGKPRFVHTLNGSGTAVGRALIAVMETYQQADGSIAVPDVLQPYMGGLKVVAADS.

244–246 (TAE) is a binding site for L-serine. 275 to 277 (RAE) contacts ATP. Residue Glu-298 participates in L-serine binding. Residue 365-368 (EISS) participates in ATP binding. An L-serine-binding site is contributed by Ser-400.

The protein belongs to the class-II aminoacyl-tRNA synthetase family. Type-1 seryl-tRNA synthetase subfamily. Homodimer. The tRNA molecule binds across the dimer.

Its subcellular location is the cytoplasm. The enzyme catalyses tRNA(Ser) + L-serine + ATP = L-seryl-tRNA(Ser) + AMP + diphosphate + H(+). It catalyses the reaction tRNA(Sec) + L-serine + ATP = L-seryl-tRNA(Sec) + AMP + diphosphate + H(+). Its pathway is aminoacyl-tRNA biosynthesis; selenocysteinyl-tRNA(Sec) biosynthesis; L-seryl-tRNA(Sec) from L-serine and tRNA(Sec): step 1/1. Catalyzes the attachment of serine to tRNA(Ser). Is also able to aminoacylate tRNA(Sec) with serine, to form the misacylated tRNA L-seryl-tRNA(Sec), which will be further converted into selenocysteinyl-tRNA(Sec). The polypeptide is Serine--tRNA ligase (Bradyrhizobium sp. (strain ORS 278)).